Reading from the N-terminus, the 299-residue chain is ATP phosphoribosyltransferase (299 aa).

It belongs to the ATP phosphoribosyltransferase family. Long subfamily. Equilibrium between an active dimeric form, an inactive hexameric form and higher aggregates. Interconversion between the various forms is largely reversible and is influenced by the natural substrates and inhibitors of the enzyme. Requires Mg(2+) as cofactor.

The protein localises to the cytoplasm. The enzyme catalyses 1-(5-phospho-beta-D-ribosyl)-ATP + diphosphate = 5-phospho-alpha-D-ribose 1-diphosphate + ATP. The protein operates within amino-acid biosynthesis; L-histidine biosynthesis; L-histidine from 5-phospho-alpha-D-ribose 1-diphosphate: step 1/9. Its activity is regulated as follows. Feedback inhibited by histidine. Its function is as follows. Catalyzes the condensation of ATP and 5-phosphoribose 1-diphosphate to form N'-(5'-phosphoribosyl)-ATP (PR-ATP). Has a crucial role in the pathway because the rate of histidine biosynthesis seems to be controlled primarily by regulation of HisG enzymatic activity. The chain is ATP phosphoribosyltransferase from Blochmanniella floridana.